The sequence spans 1113 residues: Antigenic protein P1 (1113 aa).

The chain crosses the membrane as a helical span at residues 7–27; it reads IIAVVAIASAIVTGVVVIVVV. N-linked (GlcNAc...) asparagine glycosylation is found at Asn-121, Asn-207, Asn-225, Asn-233, Asn-274, Asn-533, Asn-576, Asn-622, Asn-675, Asn-679, Asn-730, Asn-753, Asn-880, Asn-899, Asn-907, Asn-972, and Asn-995. Residues 159 to 473 form the Peptidase M60 domain; that stretch reads VFGQRAVAWA…SYVNMAHAFG (315 aa). In terms of domain architecture, PA14 spans 648–800; it reads LDPHQVEYEV…TEESSVDVSK (153 aa).

It localises to the membrane. The protein is Antigenic protein P1 of Entamoeba histolytica (strain ATCC 30459 / HM-1:IMSS / ABRM).